A 374-amino-acid polypeptide reads, in one-letter code: Translocating chain-associated membrane protein 1 (374 aa).

At 1-29 (MAIRKKSSKNPPVLSHEFVLQNHADIVSC) the chain is on the cytoplasmic side. The chain crosses the membrane as a helical span at residues 30–50 (VAMVFLLGLMFEITAKVSIIF). Over 51–81 (VTLQYNVTLPATEEQATESAFLYYYGIKDLA) the chain is Lumenal. N-linked (GlcNAc...) asparagine glycosylation occurs at Asn56. The chain crosses the membrane as a helical span at residues 82–102 (TVFFYMLVAIIIHAIIQEYVL). Residues 103 to 121 (DKINRRMHFSKTKHSKFNE) lie on the Cytoplasmic side of the membrane. The region spanning 117-326 (SKFNESGQLS…NFQLRRWREH (210 aa)) is the TLC domain. The chain crosses the membrane as a helical span at residues 122–142 (SGQLSAFYLFSCIWGTFILIS). The Lumenal segment spans residues 143 to 159 (ENYISDPTILWRAYPHN). A helical transmembrane segment spans residues 160 to 180 (LMTFQMKFFYISQLAYWFHAF). At 181–192 (PELYFQKTKKED) the chain is on the cytoplasmic side. A helical transmembrane segment spans residues 193–213 (IPRQLVYIGLYLFHIAGAYLL). A topological domain (lumenal) is located at residue Asn214. The chain crosses the membrane as a helical span at residues 215–235 (LNHLGLVLLVLHYFVEFLFHI). Topologically, residues 236-251 (SRLFYFSDEKYQKGFS) are cytoplasmic. A helical transmembrane segment spans residues 252 to 272 (LWAVLFVLGRLLTLILSVLTV). Over 273–297 (GFGLARAENQKLDFSTGNFNVLAVR) the chain is Lumenal. A helical membrane pass occupies residues 298-318 (IAVLASICITQAFMMWKFINF). Residues 319-374 (QLRRWREHSAFQAPAVKKKPPVTKGRSSRKGTENGVNGTVTSNGADSPRNRKEKSS) lie on the Cytoplasmic side of the membrane. The segment at 331–374 (APAVKKKPPVTKGRSSRKGTENGVNGTVTSNGADSPRNRKEKSS) is disordered. Basic residues predominate over residues 334 to 347 (VKKKPPVTKGRSSR). A compositionally biased stretch (polar residues) spans 352–363 (NGVNGTVTSNGA). A Phosphoserine modification is found at Ser365.

Belongs to the TRAM family. Interacts with SEC61B. May interact with Derlin-1/DERL1. N-glycosylated.

It localises to the endoplasmic reticulum membrane. Involved in the translocation of nascent protein chains into or through the endoplasmic reticulum (ER) membrane by facilitating the proper chain positioning at the SEC61 channel. Regulates the exposure of nascent secretory protein chain to the cytosol during translocation into the ER. May affect the phospholipid bilayer in the vicinity of the lateral gate of the SEC61 channel, thereby facilitating ER protein transport. Intimately associates with transmembrane (TM) domain of nascent membrane proteins during the entire integration process into the ER membrane. Associates with the second TM domain of G-protein-coupled receptor opsin/OPSD nascent chain in the ER membrane, which may facilitate its integration into the membrane. Under conditions of ER stress, participates in the disposal of misfolded ER membrane proteins during the unfolded protein response (UPR), an integrated stress response (ISR) pathway, by selectively retrotranslocating misfolded ER-membrane proteins from the ER into the cytosol where they are ubiquitinated and degraded by the proteasome. The sequence is that of Translocating chain-associated membrane protein 1 (TRAM1) from Bos taurus (Bovine).